The following is a 347-amino-acid chain: Single-pass membrane and coiled-coil domain-containing protein 2 (347 aa).

The disordered stretch occupies residues 1 to 89 (MMSLQLGTAG…PPSKPDEQEV (89 aa)). 3 stretches are compositionally biased toward basic and acidic residues: residues 10–21 (GKERQLAEKSRD), 36–51 (EMDH…DKPS), and 60–86 (YKMD…KPDE). Residues 139–238 (DWLERINNII…MNVLNSKLEM (100 aa)) are a coiled coil. Serine 178 is subject to Phosphoserine. The segment at 243 to 274 (GSDADSHNSEDVDTEQEEPLVPEASPSLSASP) is disordered. Acidic residues predominate over residues 253–262 (DVDTEQEEPL). The segment covering 263-273 (VPEASPSLSAS) has biased composition (low complexity). Residues 288 to 308 (LFVIVYVVTITGLSCYILFVD) traverse the membrane as a helical segment.

The protein resides in the membrane. The protein is Single-pass membrane and coiled-coil domain-containing protein 2 (Smco2) of Mus musculus (Mouse).